The chain runs to 255 residues: Ribosomal RNA small subunit methyltransferase G (255 aa).

Residues Gly89, Phe94, Asp112 to Thr114, Val140 to Glu141, and Arg159 each bind S-adenosyl-L-methionine.

This sequence belongs to the methyltransferase superfamily. RNA methyltransferase RsmG family.

It is found in the cytoplasm. Functionally, specifically methylates the N7 position of a guanine in 16S rRNA. This is Ribosomal RNA small subunit methyltransferase G from Trichodesmium erythraeum (strain IMS101).